Consider the following 287-residue polypeptide: ATP synthase gamma chain (287 aa).

Belongs to the ATPase gamma chain family. F-type ATPases have 2 components, CF(1) - the catalytic core - and CF(0) - the membrane proton channel. CF(1) has five subunits: alpha(3), beta(3), gamma(1), delta(1), epsilon(1). CF(0) has three main subunits: a, b and c.

The protein localises to the cell inner membrane. Its function is as follows. Produces ATP from ADP in the presence of a proton gradient across the membrane. The gamma chain is believed to be important in regulating ATPase activity and the flow of protons through the CF(0) complex. This Escherichia coli (strain 55989 / EAEC) protein is ATP synthase gamma chain.